A 211-amino-acid polypeptide reads, in one-letter code: Pyridoxine/pyridoxamine 5'-phosphate oxidase (211 aa).

Residues 7-10 and lysine 65 contribute to the substrate site; that span reads RREY. FMN is bound by residues 60–65, 75–76, arginine 81, lysine 82, and glutamine 104; these read RIVLLK and YT. Residues tyrosine 122, arginine 126, and serine 130 each contribute to the substrate site. FMN-binding positions include 139 to 140 and tryptophan 184; that span reads QS. Substrate is bound at residue 190–192; it reads RLH. Position 194 (arginine 194) interacts with FMN.

Belongs to the pyridoxamine 5'-phosphate oxidase family. In terms of assembly, homodimer. FMN is required as a cofactor.

It catalyses the reaction pyridoxamine 5'-phosphate + O2 + H2O = pyridoxal 5'-phosphate + H2O2 + NH4(+). It carries out the reaction pyridoxine 5'-phosphate + O2 = pyridoxal 5'-phosphate + H2O2. It participates in cofactor metabolism; pyridoxal 5'-phosphate salvage; pyridoxal 5'-phosphate from pyridoxamine 5'-phosphate: step 1/1. The protein operates within cofactor metabolism; pyridoxal 5'-phosphate salvage; pyridoxal 5'-phosphate from pyridoxine 5'-phosphate: step 1/1. Catalyzes the oxidation of either pyridoxine 5'-phosphate (PNP) or pyridoxamine 5'-phosphate (PMP) into pyridoxal 5'-phosphate (PLP). The protein is Pyridoxine/pyridoxamine 5'-phosphate oxidase of Vibrio parahaemolyticus serotype O3:K6 (strain RIMD 2210633).